The primary structure comprises 214 residues: U3 small nucleolar RNA-associated protein 16 (214 aa).

Basic and acidic residues predominate over residues 1 to 10 (MSNGHVKFDA). The interval 1–106 (MSNGHVKFDA…KSVNETEVTD (106 aa)) is disordered. Serine 16 bears the Phosphoserine mark. Residues 22-41 (DRQDDVLVISKKDKEVHSSS) are compositionally biased toward basic and acidic residues. Acidic residues predominate over residues 42 to 52 (DEESDDDDAPQ). Residues serine 45, serine 65, and serine 144 each carry the phosphoserine modification. Residues 54 to 75 (EGLHSGKSEVESQITQREEAIR) are compositionally biased toward basic and acidic residues. The disordered stretch occupies residues 182-214 (STTQDSKTLPPKKESSIIRSKDRWLNRKALNKG). Over residues 192-206 (PKKESSIIRSKDRWL) the composition is skewed to basic and acidic residues.

It belongs to the UTP16 family. In terms of assembly, part of the small subunit (SSU) processome composed of at least 40 protein subunits and the RNA chaperone small nucleolar RNA (snoRNA) U3. Interacts with snoRNA U3. Interacts with MPP10.

It localises to the nucleus. It is found in the nucleolus. In terms of biological role, functions as part of the small subunit (SSU) processome, first precursor of the small eukaryotic ribosomal subunit that coordinates the first two steps of ribosome biogenesis in transcription of the primary transcript pre-RNA and pre-18S processing. During the assembly of the SSU processome in the nucleolus, many ribosome biogenesis factors, an RNA chaperone and ribosomal proteins associate with the nascent pre-rRNA and work in concert to generate RNA folding, modifications, rearrangements and cleavage as well as targeted degradation of pre-ribosomal RNA by the RNA exosome. Has a role in bud site selection maybe via the regulation of expression of bipolar budding components. The sequence is that of U3 small nucleolar RNA-associated protein 16 (BUD21) from Saccharomyces cerevisiae (strain ATCC 204508 / S288c) (Baker's yeast).